We begin with the raw amino-acid sequence, 788 residues long: Spastin (788 aa).

Residues 1–105 are disordered; sequence MVRTKNQSSS…PRSAGGPSSV (105 aa). Residues 1-116 lie on the Cytoplasmic side of the membrane; sequence MVRTKNQSSS…KQNLYVVSFP (116 aa). Residues 1–227 form a required for localization to punctate cytoplasmic foci region; sequence MVRTKNQSSS…NRSGSGYSPG (227 aa). Composition is skewed to low complexity over residues 8–48 and 57–75; these read SSSS…SSHR and ATNV…SSPD. Positions 117–137 form an intramembrane region, helical; sequence IIFLFNVLRSLIYQLFCIFRY. At 138 to 788 the chain is on the cytoplasmic side; it reads LYGASTKVIY…WSSDYGDITI (651 aa). Residues 227–788 are sufficient for interaction with microtubules and microtubule severing; sequence GPGDPLLAKQ…WSSDYGDITI (562 aa). The MIT domain occupies 240–315; the sequence is HRRAFEYISK…SMARDRLHFL (76 aa). A compositionally biased stretch (basic and acidic residues) spans 330–353; it reads KEEQKPNPSREQHQKPQKAREAAD. The segment at 330–484 is disordered; it reads KEEQKPNPSR…SGSGSGASTP (155 aa). The span at 380-400 shows a compositional bias: low complexity; that stretch reads LTTPRISATATTPTSSSSLAS. Polar residues-rich tracts occupy residues 419–433 and 453–469; these read NKSQ…SKTS and QFSS…RTPI. The segment at 471–485 is required for interaction with microtubules; that stretch reads NNGASGSGSGASTPV. 553–560 is a binding site for ATP; it reads GPPGNGKT.

This sequence belongs to the AAA ATPase family. Spastin subfamily. In terms of assembly, homohexamer. The homohexamer is stabilized by ATP-binding. The homohexamer may adopt a ring conformation through which microtubules pass prior to being severed. Interacts with microtubules. Interacts with atl; may be involved in microtubule dynamics.

The protein resides in the membrane. It is found in the cytoplasm. Its subcellular location is the cytoskeleton. It localises to the microtubule organizing center. The protein localises to the centrosome. The protein resides in the chromosome. It is found in the lipid droplet. The catalysed reaction is n ATP + n H2O + a microtubule = n ADP + n phosphate + (n+1) alpha/beta tubulin heterodimers.. ATP-dependent microtubule severing protein. Stimulates microtubule minus-end depolymerization and poleward microtubule flux in the mitotic spindle. Regulates microtubule stability in the neuromuscular junction synapse. Involved in lipid metabolism by regulating the size and distribution of lipid droplets. Involved in axon regeneration by regulating microtubule severing. In Drosophila pseudoobscura pseudoobscura (Fruit fly), this protein is Spastin.